Reading from the N-terminus, the 2053-residue chain is Cell adhesion molecule DSCAML1 (2053 aa).

An N-terminal signal peptide occupies residues 1-18; the sequence is MWLVTFLLLLDSLHKARP. 9 consecutive Ig-like C2-type domains span residues 19–119, 115–217, 226–306, 314–402, 408–501, 506–586, 596–685, 690–784, and 788–885; these read EDVG…NIRV, PNIR…ARLS, PTIL…AEAT, PLHV…AIIA, PRIV…ARIN, PSIR…LSIS, PPLI…RQLI, PRFV…MFLT, and PAMI…LTVQ. The Extracellular segment spans residues 19–1591; it reads EDVGTSLYFV…AQGEGDDVKK (1573 aa). N29 and N79 each carry an N-linked (GlcNAc...) asparagine glycan. 5 disulfides stabilise this stretch: C47–C103, C146–C198, C247–C294, C336–C386, and C429–C485. N-linked (GlcNAc...) asparagine glycans are attached at residues N368, N471, N513, N556, N666, N710, N749, N796, and N809. 2 disulfides stabilise this stretch: C526/C575 and C617/C669. A disulfide bridge links C711 with C767. C810 and C867 are joined by a disulfide. Fibronectin type-III domains are found at residues 887-984, 989-1088, 1093-1189, and 1193-1288; these read PPDP…TEEA, PPMD…TLED, PPEN…TKED, and PPAG…AGKA. Residues N926, N1082, N1144, N1162, N1275, and N1345 are each glycosylated (N-linked (GlcNAc...) asparagine). The Ig-like C2-type 10 domain occupies 1278–1377; it reads EKVTIEPAGK…TGGFDTIIVN (100 aa). An intrachain disulfide couples C1311 to C1363. Fibronectin type-III domains are found at residues 1383-1477 and 1478-1578; these read PPDQ…THGR and EPSF…TIPP. N-linked (GlcNAc...) asparagine glycosylation is found at N1492, N1531, and N1561. Residues 1592–1612 traverse the membrane as a helical segment; it reads LFTIGCPVILATLGVALLFIV. At 1613 to 2053 the chain is on the cytoplasmic side; it reads RKKRKEKRLK…GAYSKSYTLV (441 aa). 4 disordered regions span residues 1715–1741, 1773–1803, 1840–1862, and 1974–2053; these read PLIDMSDIRPGTNPVSRKNVKSAHSTR, HGVTVTESDSYSASLSQDTDKGRNSMVSTES, SSDQMTTGTNENADSMTSMSTPS, and LAMP…YTLV. Basic residues predominate over residues 1732 to 1741; that stretch reads KNVKSAHSTR. A compositionally biased stretch (polar residues) spans 1773 to 1789; the sequence is HGVTVTESDSYSASLSQ. Residues 1977-2009 show a composition bias toward pro residues; it reads PAPPAGTAPPAPGPTPAEPPTAPSAAPPAPSTE. Positions 2029-2041 are enriched in polar residues; that stretch reads EMSTSGVGRSQKQ.

As to quaternary structure, homodimer; mediates homophilic interactions to promote cell adhesion. In terms of tissue distribution, detected in heart, liver, pancreas, skeletal muscle, kidney and in brain, in particular in the amygdala, caudate nucleus, corpus callosum, hippocampus, substantia nigra, thalamus and subthalamus.

The protein localises to the cell membrane. The protein resides in the synapse. In terms of biological role, cell adhesion molecule that plays a role in neuronal self-avoidance. Promotes repulsion between specific neuronal processes of either the same cell or the same subtype of cells. Promotes both isoneuronal self-avoidance for creating an orderly neurite arborization in retinal rod bipolar cells and heteroneuronal self-avoidance to maintain mosaic spacing between AII amacrine cells. Adhesion molecule that promotes lamina-specific synaptic connections in the retina: expressed in specific subsets of interneurons and retinal ganglion cells (RGCs) and promotes synaptic connectivity via homophilic interactions. The sequence is that of Cell adhesion molecule DSCAML1 (DSCAML1) from Homo sapiens (Human).